We begin with the raw amino-acid sequence, 887 residues long: Amyloid-beta-like protein (887 aa).

A signal peptide spans 1–27 (MCAALRRNLLLRSLWVVLAIGTAQVQA). Over 28–813 (ASPRWEPQIA…HAAKEGRNVY (786 aa)) the chain is Extracellular. Residues 30-133 (PRWEPQIAVL…KPFRCLGPFQ (104 aa)) are GFLD subdomain. Residues 30–199 (PRWEPQIAVL…SGVEFVCCPK (170 aa)) enclose the E1 domain. Intrachain disulfides connect Cys40-Cys70, Cys81-Cys128, Cys106-Cys116, Cys143-Cys197, Cys154-Cys184, and Cys168-Cys196. The tract at residues 141 to 199 (EGCLFDHIHNASRCWPFVRWNQTGAAACQERGMQMRSFAMLLPCGISVFSGVEFVCCPK) is cuBD subdomain. N-linked (GlcNAc...) asparagine glycosylation is found at Asn150 and Asn161. Disordered regions lie at residues 225-365 (NDEL…STPQ) and 377-396 (NSGN…QPTS). 2 N-linked (GlcNAc...) asparagine glycosylation sites follow: Asn237 and Asn240. Positions 246 to 267 (NEDDLDDEDDLMGDDEEDDMVA) are enriched in acidic residues. A compositionally biased stretch (low complexity) spans 268 to 292 (DEAATAGGSPNTGSSGDSNSGSLDD). The segment covering 293–321 (INAEYDSGEEGDNYEEDGAGSESEAEVEA) has biased composition (acidic residues). The span at 329-352 (AKVVSLKSDSSSPSSAPVAPAPEK) shows a compositional bias: low complexity. The 203-residue stretch at 395–597 (TSDPYFTHFD…AKIAQLMNDY (203 aa)) folds into the E2 domain. Asn574 is a glycosylation site (N-linked (GlcNAc...) asparagine). The disordered stretch occupies residues 675–743 (KSQVAEQQSQ…TEYGEATVSS (69 aa)). Residues 681 to 699 (QQSQPTQSSTQSQAQQQQQ) show a composition bias toward low complexity. Residues 814-834 (FTLSFAGIALMAAVFVGVAVA) form a helical membrane-spanning segment. Residues 835-887 (KWRTSRSPHAQGFIEVDQNVTTHHPIVREEKIVPNMQINGYENPTYKYFEVKE) are Cytoplasmic-facing. The YENPXY motif signature appears at 875–880 (YENPTY).

The protein belongs to the APP family. Interacts (via the intracellular domain, ICD) with APP-BP1. Expressed in postmitotic neurons in the central and peripheral nervous systems. Within the nervous system, transcripts are not observed in neuroblasts, newly generated neurons and at least one class of presumed glial cells.

Its subcellular location is the membrane. Its function is as follows. During development, plays a role in the regulation of the neddylation pathway. Appl and APP-BP1 interact antagonistically during development. The sequence is that of Amyloid-beta-like protein (Appl) from Drosophila melanogaster (Fruit fly).